Reading from the N-terminus, the 407-residue chain is Arrestin red cell isoform 1 (407 aa).

This sequence belongs to the arrestin family.

It is found in the cytoplasm. In Oncorhynchus mykiss (Rainbow trout), this protein is Arrestin red cell isoform 1.